We begin with the raw amino-acid sequence, 435 residues long: Succinate--CoA ligase [ADP-forming] subunit beta, mitochondrial (435 aa).

The N-terminal 20 residues, 1-20 (MIGRISQPLLNTSQKFMAPA), are a transit peptide targeting the mitochondrion. The ATP-grasp domain occupies 32–259 (MKILQNYEIK…SNAEFRQAKL (228 aa)). ATP contacts are provided by residues Lys69 and 76–78 (GRG). The Mg(2+) site is built by Asn229 and Asp243. Residues Asn294 and 352–354 (GIM) contribute to the substrate site.

The protein belongs to the succinate/malate CoA ligase beta subunit family. ATP-specific subunit beta subfamily. As to quaternary structure, heterodimer of an alpha and a beta subunit. The beta subunit determines specificity for ATP. The cofactor is Mg(2+).

It localises to the mitochondrion. The catalysed reaction is succinate + ATP + CoA = succinyl-CoA + ADP + phosphate. It participates in carbohydrate metabolism; tricarboxylic acid cycle; succinate from succinyl-CoA (ligase route): step 1/1. In terms of biological role, ATP-specific succinyl-CoA synthetase functions in the citric acid cycle (TCA), coupling the hydrolysis of succinyl-CoA to the synthesis of ATP and thus represents the only step of substrate-level phosphorylation in the TCA. The beta subunit provides nucleotide specificity of the enzyme and binds the substrate succinate, while the binding sites for coenzyme A and phosphate are found in the alpha subunit. The protein is Succinate--CoA ligase [ADP-forming] subunit beta, mitochondrial of Caenorhabditis elegans.